We begin with the raw amino-acid sequence, 191 residues long: Peptidyl-tRNA hydrolase (191 aa).

Residue Tyr-17 participates in tRNA binding. His-22 (proton acceptor) is an active-site residue. The tRNA site is built by Tyr-68, Asn-70, and Asn-116.

It belongs to the PTH family. As to quaternary structure, monomer.

It localises to the cytoplasm. It carries out the reaction an N-acyl-L-alpha-aminoacyl-tRNA + H2O = an N-acyl-L-amino acid + a tRNA + H(+). Functionally, hydrolyzes ribosome-free peptidyl-tRNAs (with 1 or more amino acids incorporated), which drop off the ribosome during protein synthesis, or as a result of ribosome stalling. In terms of biological role, catalyzes the release of premature peptidyl moieties from peptidyl-tRNA molecules trapped in stalled 50S ribosomal subunits, and thus maintains levels of free tRNAs and 50S ribosomes. This chain is Peptidyl-tRNA hydrolase, found in Mycobacterium marinum (strain ATCC BAA-535 / M).